A 277-amino-acid chain; its full sequence is MIOREX complex component 2 (277 aa).

It belongs to the NAD(P)-dependent epimerase/dehydratase family. Associates with the mitochondrial ribosome. Component of a multi-subunit COQ enzyme complex.

The protein localises to the mitochondrion. It functions in the pathway cofactor biosynthesis; ubiquinone biosynthesis. Its function is as follows. Component of MIOREX complexes, large expressome-like assemblies of ribosomes with factors involved in all the steps of post-transcriptional gene expression. Component of a multi-subunit COQ enzyme complex required for coenzyme Q biosynthesis. In Saccharomyces cerevisiae (strain ATCC 204508 / S288c) (Baker's yeast), this protein is MIOREX complex component 2.